The sequence spans 184 residues: Shikimate kinase (184 aa).

15 to 20 provides a ligand contact to ATP; sequence GAGKTS. Thr19 contacts Mg(2+). Asp37, Arg61, and Gly83 together coordinate substrate. Position 123 (Arg123) interacts with ATP. Substrate is bound at residue Arg142.

This sequence belongs to the shikimate kinase family. Monomer. It depends on Mg(2+) as a cofactor.

The protein resides in the cytoplasm. The enzyme catalyses shikimate + ATP = 3-phosphoshikimate + ADP + H(+). It functions in the pathway metabolic intermediate biosynthesis; chorismate biosynthesis; chorismate from D-erythrose 4-phosphate and phosphoenolpyruvate: step 5/7. In terms of biological role, catalyzes the specific phosphorylation of the 3-hydroxyl group of shikimic acid using ATP as a cosubstrate. The protein is Shikimate kinase of Coxiella burnetii (strain CbuK_Q154) (Coxiella burnetii (strain Q154)).